Consider the following 353-residue polypeptide: MTSPLSDLLNLDLSDTKKIIAEYIWIGGSGMDIRSKARTLPGPVSNPTKLPKWNYDGSSTDQAAGDDSEVILYPQAIFKDPFRKGNNILVMCDAYRPAGDPIPTNNRHKAVKIFDHPNVKAEEPWFGIEQEYTLLKKDVKWPLGWPLGGFPGPQGPYYCAVGADKAFGRDIVDAHYKACLYSGLSIGGANGEVMPGQWEFQISPTVGIGAGDQLWVARYILERITEICGVIVSFDPKPIQGDWNGAAAHTNFSTKSMRKDGGLDLIKEAIKKLEVKHKQHIAAYGEGNERRLTGKHETADINTFSWGVADRGASVRVGRDTEKEGKGYFEDRRPSSNMDPYLVTSMIAETTIL.

N-acetylthreonine is present on T2. S3 carries the post-translational modification Phosphoserine. Residues I19–G99 form the GS beta-grasp domain. A GS catalytic domain is found at N106–L353.

Belongs to the glutamine synthetase family. In terms of assembly, homooctamer. In terms of tissue distribution, not expressed in roots.

It is found in the cytoplasm. The enzyme catalyses L-glutamate + NH4(+) + ATP = L-glutamine + ADP + phosphate + H(+). The sequence is that of Glutamine synthetase cytosolic isozyme 1-5 (GLN1-5) from Arabidopsis thaliana (Mouse-ear cress).